The chain runs to 293 residues: Ribosomal protein L11 methyltransferase (293 aa).

S-adenosyl-L-methionine is bound by residues threonine 145, glycine 166, aspartate 188, and asparagine 230.

It belongs to the methyltransferase superfamily. PrmA family.

It is found in the cytoplasm. It carries out the reaction L-lysyl-[protein] + 3 S-adenosyl-L-methionine = N(6),N(6),N(6)-trimethyl-L-lysyl-[protein] + 3 S-adenosyl-L-homocysteine + 3 H(+). Functionally, methylates ribosomal protein L11. The chain is Ribosomal protein L11 methyltransferase from Yersinia pseudotuberculosis serotype I (strain IP32953).